We begin with the raw amino-acid sequence, 610 residues long: tRNA uridine 5-carboxymethylaminomethyl modification enzyme MnmG (610 aa).

14–19 (GAGHAG) provides a ligand contact to FAD. 274-288 (GPRYCPSIEDKIVKF) is an NAD(+) binding site.

Belongs to the MnmG family. In terms of assembly, homodimer. Heterotetramer of two MnmE and two MnmG subunits. FAD is required as a cofactor.

It is found in the cytoplasm. In terms of biological role, NAD-binding protein involved in the addition of a carboxymethylaminomethyl (cmnm) group at the wobble position (U34) of certain tRNAs, forming tRNA-cmnm(5)s(2)U34. In Chlamydia muridarum (strain MoPn / Nigg), this protein is tRNA uridine 5-carboxymethylaminomethyl modification enzyme MnmG.